The chain runs to 255 residues: Large ribosomal subunit protein uL4 (255 aa).

Belongs to the universal ribosomal protein uL4 family. In terms of assembly, part of the 50S ribosomal subunit.

One of the primary rRNA binding proteins, this protein initially binds near the 5'-end of the 23S rRNA. It is important during the early stages of 50S assembly. It makes multiple contacts with different domains of the 23S rRNA in the assembled 50S subunit and ribosome. Its function is as follows. Forms part of the polypeptide exit tunnel. The polypeptide is Large ribosomal subunit protein uL4 (Thermococcus kodakarensis (strain ATCC BAA-918 / JCM 12380 / KOD1) (Pyrococcus kodakaraensis (strain KOD1))).